Consider the following 171-residue polypeptide: 3-hydroxydecanoyl-[acyl-carrier-protein] dehydratase (171 aa).

Residue His71 is part of the active site.

It belongs to the thioester dehydratase family. FabA subfamily. As to quaternary structure, homodimer.

Its subcellular location is the cytoplasm. It carries out the reaction a (3R)-hydroxyacyl-[ACP] = a (2E)-enoyl-[ACP] + H2O. The catalysed reaction is (3R)-hydroxydecanoyl-[ACP] = (2E)-decenoyl-[ACP] + H2O. It catalyses the reaction (2E)-decenoyl-[ACP] = (3Z)-decenoyl-[ACP]. The protein operates within lipid metabolism; fatty acid biosynthesis. Its function is as follows. Necessary for the introduction of cis unsaturation into fatty acids. Catalyzes the dehydration of (3R)-3-hydroxydecanoyl-ACP to E-(2)-decenoyl-ACP and then its isomerization to Z-(3)-decenoyl-ACP. Can catalyze the dehydratase reaction for beta-hydroxyacyl-ACPs with saturated chain lengths up to 16:0, being most active on intermediate chain length. The polypeptide is 3-hydroxydecanoyl-[acyl-carrier-protein] dehydratase (Rhizobium meliloti (strain 1021) (Ensifer meliloti)).